The sequence spans 837 residues: Periplasmic nitrate reductase (837 aa).

Positions Met-1 to Ala-32 form a signal peptide, tat-type signal. Residues Leu-44 to Asp-100 enclose the 4Fe-4S Mo/W bis-MGD-type domain. [4Fe-4S] cluster is bound by residues Cys-51, Cys-54, Cys-58, and Cys-86. Mo-bis(molybdopterin guanine dinucleotide) is bound by residues Lys-88, Gln-155, Asn-180, Cys-184, Trp-217–Met-224, Ser-248–His-252, Gln-267–Asp-269, Met-378, Gln-382, Asn-488, Ser-514–Asp-515, Lys-537, Asp-564, and Thr-724–Ser-733. A substrate-binding site is contributed by Trp-800. Mo-bis(molybdopterin guanine dinucleotide) is bound by residues Asn-808 and Lys-825.

It belongs to the prokaryotic molybdopterin-containing oxidoreductase family. NasA/NapA/NarB subfamily. In terms of assembly, component of the periplasmic nitrate reductase NapAB complex composed of NapA and NapB. [4Fe-4S] cluster serves as cofactor. The cofactor is Mo-bis(molybdopterin guanine dinucleotide). Predicted to be exported by the Tat system. The position of the signal peptide cleavage has not been experimentally proven.

It is found in the periplasm. It catalyses the reaction 2 Fe(II)-[cytochrome] + nitrate + 2 H(+) = 2 Fe(III)-[cytochrome] + nitrite + H2O. In terms of biological role, catalytic subunit of the periplasmic nitrate reductase complex NapAB. Receives electrons from NapB and catalyzes the reduction of nitrate to nitrite. The chain is Periplasmic nitrate reductase from Bradyrhizobium diazoefficiens (strain JCM 10833 / BCRC 13528 / IAM 13628 / NBRC 14792 / USDA 110).